Here is a 174-residue protein sequence, read N- to C-terminus: Large ribosomal subunit protein uL18 (174 aa).

It belongs to the universal ribosomal protein uL18 family. In terms of assembly, part of the 50S ribosomal subunit. Contacts the 5S and 23S rRNAs.

Its function is as follows. This is one of the proteins that bind and probably mediate the attachment of the 5S RNA into the large ribosomal subunit, where it forms part of the central protuberance. In Methanocorpusculum labreanum (strain ATCC 43576 / DSM 4855 / Z), this protein is Large ribosomal subunit protein uL18.